A 245-amino-acid chain; its full sequence is Large ribosomal subunit protein eL29 (245 aa).

Residues 1–26 (MAKSKNHTTHNQSRKWHRNGIKKPRS) show a composition bias toward basic residues. Disordered regions lie at residues 1-33 (MAKSKNHTTHNQSRKWHRNGIKKPRSQRYESLK) and 114-245 (RGLR…AKAP). An N6-methyllysine modification is found at lysine 5. Phosphoserine is present on serine 31. N6-acetyllysine is present on lysine 33. Residues 134 to 150 (KGKVKAQIKAQAQAQIK) are compositionally biased toward low complexity. The segment covering 157–171 (AQAETKPKAQAETKP) has biased composition (basic and acidic residues). Composition is skewed to low complexity over residues 172–226 (KAQA…ATPA) and 234–245 (PPKGAQPPAKAP).

The protein belongs to the eukaryotic ribosomal protein eL29 family. In terms of assembly, component of the large ribosomal subunit.

Its subcellular location is the cytoplasm. Its function is as follows. Component of the large ribosomal subunit. The ribosome is a large ribonucleoprotein complex responsible for the synthesis of proteins in the cell. The protein is Large ribosomal subunit protein eL29 (RPL29) of Oryctolagus cuniculus (Rabbit).